Here is a 347-residue protein sequence, read N- to C-terminus: UDP-glucose 4-epimerase (347 aa).

NAD(+)-binding positions include 11–13 (GYI), 32–36 (DNFHN), 65–66 (DI), Phe-87, and Lys-91. A substrate-binding site is contributed by 131–133 (SAT). Tyr-156 (proton acceptor) is an active-site residue. Positions 160 and 184 each coordinate NAD(+). Residues 184–186 (YFN), 205–207 (NNL), 223–225 (NVF), Arg-238, and 299–302 (REGD) contribute to the substrate site.

It belongs to the NAD(P)-dependent epimerase/dehydratase family. In terms of assembly, homodimer. It depends on NAD(+) as a cofactor.

It carries out the reaction UDP-alpha-D-glucose = UDP-alpha-D-galactose. The enzyme catalyses UDP-N-acetyl-alpha-D-glucosamine = UDP-N-acetyl-alpha-D-galactosamine. It functions in the pathway carbohydrate metabolism; galactose metabolism. Catalyzes two distinct but analogous reactions: the reversible epimerization of UDP-glucose to UDP-galactose and the reversible epimerization of UDP-N-acetylglucosamine to UDP-N-acetylgalactosamine. The reaction with UDP-Gal plays a critical role in the Leloir pathway of galactose catabolism in which galactose is converted to the glycolytic intermediate glucose 6-phosphate. It contributes to the catabolism of dietary galactose and enables the endogenous biosynthesis of both UDP-Gal and UDP-GalNAc when exogenous sources are limited. Both UDP-sugar interconversions are important in the synthesis of glycoproteins and glycolipids. The protein is UDP-glucose 4-epimerase (Gale) of Mus musculus (Mouse).